Reading from the N-terminus, the 142-residue chain is Hemoglobin subunit alpha (142 aa).

The Globin domain maps to 2-142 (VLSPADKTNV…VSTVLTSKYR (141 aa)). At S4 the chain carries Phosphoserine. Position 8 is an N6-succinyllysine (K8). At T9 the chain carries Phosphothreonine. The residue at position 12 (K12) is an N6-succinyllysine. Position 17 is an N6-acetyllysine; alternate (K17). The residue at position 17 (K17) is an N6-succinyllysine; alternate. A Phosphotyrosine modification is found at Y25. S36 is subject to Phosphoserine. K41 carries the N6-succinyllysine modification. Phosphoserine is present on S50. H59 lines the O2 pocket. H88 serves as a coordination point for heme b. S103 is subject to Phosphoserine. The residue at position 109 (T109) is a Phosphothreonine. A phosphoserine mark is found at S125 and S132. Phosphothreonine occurs at positions 135 and 138. A Phosphoserine modification is found at S139.

This sequence belongs to the globin family. In terms of assembly, heterotetramer of two alpha chains and two beta chains. As to expression, red blood cells.

In terms of biological role, involved in oxygen transport from the lung to the various peripheral tissues. Functionally, hemopressin acts as an antagonist peptide of the cannabinoid receptor CNR1. Hemopressin-binding efficiently blocks cannabinoid receptor CNR1 and subsequent signaling. The sequence is that of Hemoglobin subunit alpha (HBA) from Piliocolobus badius (Western red colobus).